Here is a 450-residue protein sequence, read N- to C-terminus: MTATIKTLYRKLKHLKNSQEFEVNGWVVSSRGNDKIRFVTLNDGSSVENLQLVLKEDEIKKVNVDHLSLGAAVYAKGVLILTPEAKQPFELVVSELEIIGKVDNNFPIQKKETSLDFLREIPHLRHRTNLFRAIMIIRATLAYEIHQFFNKNDFINISVPIITSNDGEGAGETLLVDDESKDYFFKQKAFLGVTGQLHAEAYAAGFKNVYTFAPTFRAENSHTSRHLAEFWMIEPEMAFATLKDDIKIADSMLKTVIKNTIEKCPDEMKLLDFLKDNTLLPTLNEFIHKKITVLDYKVAVKKLLEHKYRFEEKNIYFGMDLASEHEKFISESIVKGPVAIINYPKDIKAFYMYQNADNKTVACFDLLVPGIGELIGGSQRESRYEKLVTRMAELNIPQEPLQWYLDLRKYGYAPSSGFGLGFERLVMYVTGISNIRDVIPFPRVAGTIKM.

This sequence belongs to the class-II aminoacyl-tRNA synthetase family. As to quaternary structure, homodimer.

It localises to the cytoplasm. It carries out the reaction tRNA(Asn) + L-asparagine + ATP = L-asparaginyl-tRNA(Asn) + AMP + diphosphate + H(+). In Metamycoplasma arthritidis (strain 158L3-1) (Mycoplasma arthritidis), this protein is Asparagine--tRNA ligase.